Here is a 501-residue protein sequence, read N- to C-terminus: MDALLQLKGIDKAFPGVKALSGAALNVYPGRVMALMGENGAGKSTMMKVLTGIYTRDAGSLLWLGKETTFNGPKSSQEAGIGIIHQELNLIPQLTIAENIFLGREFVNRFGKIDWKKMYAEADQLLAKLNLRFKSDKLVGELSIGDQQMVEIAKVLSFESKVIIMDEPTDALTDTETESLFRVIRELKSQRRGIVYISHRMKEIFEICDDVTVFRDGQFIAEREVATLTEDSLIEMMVGRKLEDQYPHLDNAPGEIRLKVDNLCGPGVNDVSFVLRKGEILGISGLMGAGRTELMKVLYGAMPRTSGYVTLDGHEVVTRSPQDGLANGIVYISEDRKRDGLVLGMSVKENMSLTALDYFSRAGGSLKHKDEQQAVGDFIRLFNVKTPSMEQAIGLLSGGNQQKVAIARGLMTRPKVLILDEPTRGVDVGAKKEIYQLINQFKADGLSIILVSSEMPEVLGMSDRIIVMHEGHLSGEFTREQATQEVLMAAAVGKLNRVNQE.

ABC transporter domains lie at 5 to 241 (LQLK…VGRK) and 252 to 495 (APGE…VGKL). 37–44 (GENGAGKS) provides a ligand contact to ATP.

The protein belongs to the ABC transporter superfamily. Ribose importer (TC 3.A.1.2.1) family. The complex is composed of an ATP-binding protein (RbsA), two transmembrane proteins (RbsC) and a solute-binding protein (RbsB).

It localises to the cell inner membrane. The enzyme catalyses D-ribose(out) + ATP + H2O = D-ribose(in) + ADP + phosphate + H(+). Part of the ABC transporter complex RbsABC involved in ribose import. Responsible for energy coupling to the transport system. The sequence is that of Ribose import ATP-binding protein RbsA from Salmonella paratyphi A (strain ATCC 9150 / SARB42).